The sequence spans 166 residues: uncharacterized protein (166 aa).

It to C.perfringens pCP13 PCP12.

This is an uncharacterized protein from Clostridium perfringens.